The primary structure comprises 267 residues: 2-keto-3-deoxy-L-rhamnonate aldolase (267 aa).

The active-site Proton acceptor is the histidine 49. Residue glutamine 151 coordinates substrate. Residue glutamate 153 participates in Mg(2+) binding. Residues alanine 178 and aspartate 179 each coordinate substrate. Aspartate 179 is a Mg(2+) binding site.

Belongs to the HpcH/HpaI aldolase family. KDR aldolase subfamily. In terms of assembly, homohexamer. Mg(2+) serves as cofactor.

The catalysed reaction is 2-dehydro-3-deoxy-L-rhamnonate = (S)-lactaldehyde + pyruvate. Catalyzes the reversible retro-aldol cleavage of 2-keto-3-deoxy-L-rhamnonate (KDR) to pyruvate and lactaldehyde. The sequence is that of 2-keto-3-deoxy-L-rhamnonate aldolase from Salmonella typhi.